Consider the following 314-residue polypeptide: Ribosomal RNA small subunit methyltransferase H (314 aa).

Residues 32–34 (GGH), Asp-52, Phe-79, Asp-100, and Gln-107 contribute to the S-adenosyl-L-methionine site.

The protein belongs to the methyltransferase superfamily. RsmH family.

The protein localises to the cytoplasm. The enzyme catalyses cytidine(1402) in 16S rRNA + S-adenosyl-L-methionine = N(4)-methylcytidine(1402) in 16S rRNA + S-adenosyl-L-homocysteine + H(+). Its function is as follows. Specifically methylates the N4 position of cytidine in position 1402 (C1402) of 16S rRNA. This Shouchella clausii (strain KSM-K16) (Alkalihalobacillus clausii) protein is Ribosomal RNA small subunit methyltransferase H.